The primary structure comprises 489 residues: Lysine--tRNA ligase (489 aa).

Positions 399 and 406 each coordinate Mg(2+).

The protein belongs to the class-II aminoacyl-tRNA synthetase family. In terms of assembly, homodimer. Mg(2+) serves as cofactor.

It localises to the cytoplasm. The enzyme catalyses tRNA(Lys) + L-lysine + ATP = L-lysyl-tRNA(Lys) + AMP + diphosphate. This Roseiflexus sp. (strain RS-1) protein is Lysine--tRNA ligase.